We begin with the raw amino-acid sequence, 429 residues long: Ribosomal RNA small subunit methyltransferase B (429 aa).

S-adenosyl-L-methionine-binding positions include 254-260 (CAAPGGK), Asp277, Asp303, and Asp322. The Nucleophile role is filled by Cys375. Positions 397–419 (ALSETGTPDQPGQQNLPGGEEGD) are disordered. The segment covering 400–412 (ETGTPDQPGQQNL) has biased composition (polar residues).

It belongs to the class I-like SAM-binding methyltransferase superfamily. RsmB/NOP family.

Its subcellular location is the cytoplasm. The enzyme catalyses cytidine(967) in 16S rRNA + S-adenosyl-L-methionine = 5-methylcytidine(967) in 16S rRNA + S-adenosyl-L-homocysteine + H(+). Its function is as follows. Specifically methylates the cytosine at position 967 (m5C967) of 16S rRNA. The polypeptide is Ribosomal RNA small subunit methyltransferase B (Salmonella newport (strain SL254)).